Reading from the N-terminus, the 468-residue chain is Abscisic acid 8'-hydroxylase 4 (468 aa).

The chain crosses the membrane as a helical span at residues 4-24 (IWFLVVPILILCLLLVRVIVS). Residue cysteine 415 coordinates heme.

This sequence belongs to the cytochrome P450 family. Heme is required as a cofactor. As to expression, mainly expressed in flowers. Lower expression in siliques, rosette leaves, roots and stems. Not expressed in dry seeds. Expressed in silique envelopes, but not in embryo or endosperm during the seed development.

The protein localises to the membrane. It catalyses the reaction 2-cis-(+)-abscisate + reduced [NADPH--hemoprotein reductase] + O2 = (+)-8'-hydroxyabscisate + oxidized [NADPH--hemoprotein reductase] + H2O + H(+). It participates in plant hormone degradation; abscisic acid degradation. Involved in the oxidative degradation of abscisic acid, but not in the isomerization of the produced 8'-hydroxyabscisic acid (8'-OH-ABA) to (-)-phaseic acid (PA). The chain is Abscisic acid 8'-hydroxylase 4 (CYP707A4) from Arabidopsis thaliana (Mouse-ear cress).